We begin with the raw amino-acid sequence, 304 residues long: MSTRTEAVKAYLLDLQDRICTALEQEDGNAHFVEDAWTRPAGGGGRTRVIENGAVIEKGGVNFSHVFGSNLPPSASAHRPELAGRGFEALGVSLVIHPHNPHVPTSHANVRFFIAEKEGEEPVWWFGGGFDLTPYYGVEEDCVHWHRVAERACAPFGDDVYPRYKAWCDSYFHLKHRDEPRGIGGLFFDDVNQWDFDTSFAFIRAIGDAFINAYLPIVRRRKAAAYTAQQREFQEFRRGRYVEFNLVYDRGTLFGLQSGGRTESILMSLPPQVRWGYDWKAAPGSEEARLTEYFLTDRDWLADN.

S93 contacts substrate. Positions 97 and 107 each coordinate a divalent metal cation. The Proton donor role is filled by H107. Substrate is bound at residue 109-111; it reads NVR. Positions 146 and 176 each coordinate a divalent metal cation. Positions 241–276 are important for dimerization; that stretch reads YVEFNLVYDRGTLFGLQSGGRTESILMSLPPQVRWG. 259 to 261 is a binding site for substrate; sequence GGR.

The protein belongs to the aerobic coproporphyrinogen-III oxidase family. As to quaternary structure, homodimer. The cofactor is a divalent metal cation.

The protein resides in the cytoplasm. The enzyme catalyses coproporphyrinogen III + O2 + 2 H(+) = protoporphyrinogen IX + 2 CO2 + 2 H2O. Its pathway is porphyrin-containing compound metabolism; protoporphyrin-IX biosynthesis; protoporphyrinogen-IX from coproporphyrinogen-III (O2 route): step 1/1. Its function is as follows. Involved in the heme biosynthesis. Catalyzes the aerobic oxidative decarboxylation of propionate groups of rings A and B of coproporphyrinogen-III to yield the vinyl groups in protoporphyrinogen-IX. The protein is Oxygen-dependent coproporphyrinogen-III oxidase of Pseudomonas savastanoi pv. phaseolicola (strain 1448A / Race 6) (Pseudomonas syringae pv. phaseolicola (strain 1448A / Race 6)).